The sequence spans 600 residues: Malto-oligosyltrehalose trehalohydrolase (600 aa).

The segment at Met1–Ala34 is disordered. Substrate is bound at residue Arg273 to Pro278. Asp275 serves as the catalytic Nucleophile. Glu308 acts as the Proton donor in catalysis. Substrate-binding positions include Asp328–His332, Glu376, and His399–Asn404.

It belongs to the glycosyl hydrolase 13 family. Monomer.

The protein resides in the cytoplasm. The catalysed reaction is hydrolysis of (1-&gt;4)-alpha-D-glucosidic linkage in 4-alpha-D-[(1-&gt;4)-alpha-D-glucanosyl]n trehalose to yield trehalose and (1-&gt;4)-alpha-D-glucan.. The protein operates within glycan biosynthesis; trehalose biosynthesis. The protein is Malto-oligosyltrehalose trehalohydrolase (treZ) of Deinococcus radiodurans (strain ATCC 13939 / DSM 20539 / JCM 16871 / CCUG 27074 / LMG 4051 / NBRC 15346 / NCIMB 9279 / VKM B-1422 / R1).